A 346-amino-acid polypeptide reads, in one-letter code: 4-hydroxy-2-oxovalerate aldolase (346 aa).

The Pyruvate carboxyltransferase domain maps to 8–260 (VTLHDMSLRD…ETGIDLYKIM (253 aa)). Residue 16-17 (RD) coordinates substrate. Aspartate 17 is a binding site for Mn(2+). Catalysis depends on histidine 20, which acts as the Proton acceptor. Serine 170 and histidine 199 together coordinate substrate. Mn(2+) is bound by residues histidine 199 and histidine 201. Tyrosine 290 is a binding site for substrate.

The protein belongs to the 4-hydroxy-2-oxovalerate aldolase family.

It carries out the reaction (S)-4-hydroxy-2-oxopentanoate = acetaldehyde + pyruvate. This is 4-hydroxy-2-oxovalerate aldolase (nahM) from Stutzerimonas stutzeri (Pseudomonas stutzeri).